The sequence spans 644 residues: Chaperone protein HtpG (644 aa).

Residues 1-352 (MNARVEQLEF…AQDMSLNVSR (352 aa)) form an a; substrate-binding region. The b stretch occupies residues 353 to 566 (EILQQDRQIK…AFGITPALAR (214 aa)). Positions 567-644 (LYRASGQDIP…ILADRLARTL (78 aa)) are c.

The protein belongs to the heat shock protein 90 family. Homodimer.

Its subcellular location is the cytoplasm. In terms of biological role, molecular chaperone. Has ATPase activity. This chain is Chaperone protein HtpG, found in Mycolicibacterium paratuberculosis (strain ATCC BAA-968 / K-10) (Mycobacterium paratuberculosis).